Reading from the N-terminus, the 79-residue chain is Beta-defensin 15 (79 aa).

Residues 1–20 form the signal peptide; sequence MKTFLFLFAVFFFLDPAKNA. 3 disulfide bridges follow: Cys-26/Cys-53, Cys-33/Cys-47, and Cys-37/Cys-54.

The protein belongs to the beta-defensin family.

It is found in the secreted. Functionally, has antibacterial activity. The sequence is that of Beta-defensin 15 (Defb15) from Rattus norvegicus (Rat).